Reading from the N-terminus, the 520-residue chain is 2-isopropylmalate synthase (520 aa).

One can recognise a Pyruvate carboxyltransferase domain in the interval 12–274 (IRIFDTTLRD…DSAINTPRIV (263 aa)). D21, H209, H211, and N245 together coordinate Mn(2+). A regulatory domain region spans residues 396–520 (RLASMTISDV…VIAGKTAAVA (125 aa)).

It belongs to the alpha-IPM synthase/homocitrate synthase family. LeuA type 1 subfamily. As to quaternary structure, homodimer. It depends on Mn(2+) as a cofactor.

The protein localises to the cytoplasm. It carries out the reaction 3-methyl-2-oxobutanoate + acetyl-CoA + H2O = (2S)-2-isopropylmalate + CoA + H(+). It functions in the pathway amino-acid biosynthesis; L-leucine biosynthesis; L-leucine from 3-methyl-2-oxobutanoate: step 1/4. In terms of biological role, catalyzes the condensation of the acetyl group of acetyl-CoA with 3-methyl-2-oxobutanoate (2-ketoisovalerate) to form 3-carboxy-3-hydroxy-4-methylpentanoate (2-isopropylmalate). The protein is 2-isopropylmalate synthase of Xanthomonas oryzae pv. oryzae (strain KACC10331 / KXO85).